A 794-amino-acid polypeptide reads, in one-letter code: Cilia- and flagella-associated protein 184 (794 aa).

2 disordered regions span residues 1–105 and 386–458; these read MASE…VNSE and AHEE…QQDT. Residues 24–35 show a composition bias toward low complexity; it reads QMQQYMMEMQRQ. Over residues 49–69 the composition is skewed to acidic residues; that stretch reads EGYEEGQEGEGYGEEYGDQDY. 3 stretches are compositionally biased toward basic and acidic residues: residues 89-103, 386-411, and 431-445; these read QVNE…RRVN, AHEE…KDYG, and ISDK…HAEQ. Over residues 446–456 the composition is skewed to low complexity; the sequence is EQNQQAAQQQQ. 2 coiled-coil regions span residues 461-613 and 638-775; these read NKEI…LRLR and FEQL…ANQI. Residues 774–787 show a composition bias toward polar residues; that stretch reads QISTQNMQSQNNSL. The disordered stretch occupies residues 774–794; that stretch reads QISTQNMQSQNNSLKKPYQPY.

Belongs to the CFAP184 family. As to quaternary structure, forms a complex with CFAP263; the interaction is required for functional activity in cilia.

It is found in the cell projection. It localises to the cilium. In complex with CFAP263, acts as a regulator of ciliary beating that connects radial spoke 3 (RS3) to the inner dynein arm (IDA) and the nexin-dynein regulatory complex (N-DRC). The complex is positioned parallel to N-DRC and forms a connection between the arch at the base of RS3, the IDA tail and N-DRC. The polypeptide is Cilia- and flagella-associated protein 184 (CFAP184) (Tetrahymena thermophila (strain SB210)).